A 317-amino-acid polypeptide reads, in one-letter code: Cyclin-T1-3 (317 aa).

Belongs to the cyclin family. Cyclin T subfamily. As to quaternary structure, interacts with CDKC-1 and CDKC-2. As to expression, abundantly expressed in flowers. Expressed in roots, seedlings, rosettes and stems.

The protein is Cyclin-T1-3 (CYCT1-3) of Arabidopsis thaliana (Mouse-ear cress).